Reading from the N-terminus, the 634-residue chain is MQQELTLLDRINYPAELRNIPLEKLPQICKEVRNYIIDTLSGIGGHFASNLGVVELTVALHYVFDTPKDRLVWDVGHQTYPHKILTGRKDKLNTVRKFNGLSGFPKREESPYDLYNTGHAGTSISQALGEAAARDLVKENYNVVAIIGDASIATGMALEAMNHAGHLKKDMIVILNDNYMSISKNVGSISNYLNNIITSHFYNHWKRVFYTFLKWLPIIGPATERFFKKVEKGFKDVLTPGGLFEDLGFGYIGPEDGHDVIRLVKMLEKVKKMKGPILLHIITQKGKGYDPAERDPIKYHGVTPFRKEDGAMDSGDTSKIAYSKIVGKMLAILTETNPKIAAITPAMIEGSGLKEYAEKYPEHLFDVGIAEQHSVAFAGAMTNGNIIPYMCIYSTFLTRAMDQLVQDVSLMNLPVRFVIDRAGCVGPDGETHQGLFDLGYLLGLPNMDVFVPSNGQDLIDALRWMEKYDKSPVAIRFPKSSVDLKTLDFYKETELQPGTFRVFKRGTDVALISIGSMIDEAKKASERLENEGLSVTLIDLVWLRPLGAEALNEELVNVRCFVILDESYIDSGVTGYLLNRMTRENLSKYIKTFGFPPEPIHHGERKEVFQKYRLDGESIAEQVAAVLKKNLIKP.

Thiamine diphosphate-binding positions include H77 and 118–120 (GHA). D149 serves as a coordination point for Mg(2+). Thiamine diphosphate is bound by residues 150-151 (AS), N178, Y289, and E371. Residue N178 coordinates Mg(2+).

The protein belongs to the transketolase family. DXPS subfamily. In terms of assembly, homodimer. It depends on Mg(2+) as a cofactor. Thiamine diphosphate serves as cofactor.

The enzyme catalyses D-glyceraldehyde 3-phosphate + pyruvate + H(+) = 1-deoxy-D-xylulose 5-phosphate + CO2. Its pathway is metabolic intermediate biosynthesis; 1-deoxy-D-xylulose 5-phosphate biosynthesis; 1-deoxy-D-xylulose 5-phosphate from D-glyceraldehyde 3-phosphate and pyruvate: step 1/1. Catalyzes the acyloin condensation reaction between C atoms 2 and 3 of pyruvate and glyceraldehyde 3-phosphate to yield 1-deoxy-D-xylulose-5-phosphate (DXP). The chain is 1-deoxy-D-xylulose-5-phosphate synthase from Leptospira interrogans serogroup Icterohaemorrhagiae serovar copenhageni (strain Fiocruz L1-130).